A 125-amino-acid chain; its full sequence is PEP-dependent dihydroxyacetone kinase 2, phosphoryl donor subunit DhaM (125 aa).

Positions 1 to 125 (MISIVLVSHS…AILQELTNVH (125 aa)) constitute a PTS EIIA type-4 domain. His-9 functions as the Tele-phosphohistidine intermediate in the catalytic mechanism.

This sequence belongs to the PEP-utilizing enzyme family. As to quaternary structure, homodimer. The dihydroxyacetone kinase complex is composed of a homodimer of DhaM, a homodimer of DhaK and the subunit DhaL.

It localises to the cytoplasm. It carries out the reaction dihydroxyacetone + phosphoenolpyruvate = dihydroxyacetone phosphate + pyruvate. In terms of biological role, component of the dihydroxyacetone kinase complex, which is responsible for the phosphoenolpyruvate (PEP)-dependent phosphorylation of dihydroxyacetone. DhaM serves as the phosphoryl donor. Is phosphorylated by phosphoenolpyruvate in an EI- and HPr-dependent reaction, and a phosphorelay system on histidine residues finally leads to phosphoryl transfer to DhaL and dihydroxyacetone. The protein is PEP-dependent dihydroxyacetone kinase 2, phosphoryl donor subunit DhaM of Listeria innocua serovar 6a (strain ATCC BAA-680 / CLIP 11262).